Reading from the N-terminus, the 159-residue chain is Phosphopantetheine adenylyltransferase (159 aa).

Serine 9 is a binding site for substrate. ATP is bound by residues 9-10 (SF) and histidine 17. Substrate contacts are provided by lysine 41, leucine 73, and arginine 87. ATP-binding positions include 88–90 (GLR), glutamate 98, and 123–129 (YSYVSSS).

The protein belongs to the bacterial CoaD family. In terms of assembly, homohexamer. Mg(2+) is required as a cofactor.

The protein resides in the cytoplasm. The enzyme catalyses (R)-4'-phosphopantetheine + ATP + H(+) = 3'-dephospho-CoA + diphosphate. It functions in the pathway cofactor biosynthesis; coenzyme A biosynthesis; CoA from (R)-pantothenate: step 4/5. Its function is as follows. Reversibly transfers an adenylyl group from ATP to 4'-phosphopantetheine, yielding dephospho-CoA (dPCoA) and pyrophosphate. The sequence is that of Phosphopantetheine adenylyltransferase from Shouchella clausii (strain KSM-K16) (Alkalihalobacillus clausii).